Reading from the N-terminus, the 213-residue chain is Orotate phosphoribosyltransferase (213 aa).

K26 is a binding site for 5-phospho-alpha-D-ribose 1-diphosphate. Position 34 to 35 (F34 to F35) interacts with orotate. Residues Y72 to K73, R99, K100, K103, H105, and D124 to S132 each bind 5-phospho-alpha-D-ribose 1-diphosphate. The orotate site is built by T128 and R156.

Belongs to the purine/pyrimidine phosphoribosyltransferase family. PyrE subfamily. Homodimer. Requires Mg(2+) as cofactor.

The catalysed reaction is orotidine 5'-phosphate + diphosphate = orotate + 5-phospho-alpha-D-ribose 1-diphosphate. Its pathway is pyrimidine metabolism; UMP biosynthesis via de novo pathway; UMP from orotate: step 1/2. Catalyzes the transfer of a ribosyl phosphate group from 5-phosphoribose 1-diphosphate to orotate, leading to the formation of orotidine monophosphate (OMP). The chain is Orotate phosphoribosyltransferase from Methylococcus capsulatus (strain ATCC 33009 / NCIMB 11132 / Bath).